The primary structure comprises 573 residues: Transcription factor E3 (573 aa).

Phosphoserine; by MTOR is present on Ser-47. Residues 91–151 (TLSASSSAEG…SPAPASPAIS (61 aa)) form a disordered region. Over residues 107 to 126 (SSSSSSRVLLRQQLMRAQAQ) the composition is skewed to low complexity. The segment covering 127 to 136 (EQERRERREQ) has biased composition (basic and acidic residues). A compositionally biased stretch (low complexity) spans 137–151 (ASSFPSPAPASPAIS). Position 186 is an asymmetric dimethylarginine (Arg-186). Residues 209–248 (LASQALTPPPGGASVQPLPTPEAAHAPGPTSSAPNSPMAL) are disordered. Residues 258–269 (EIDDVIDEIISL) form a strong transcription activation domain region. Ser-319 carries the phosphoserine; by MTOR modification. A Glycyl lysine isopeptide (Lys-Gly) (interchain with G-Cter in SUMO2) cross-link involves residue Lys-337. The bHLH domain occupies 344 to 397 (QKKDNHNLIERRRRFNINDRIKELGTLIPKSSDPEMRWNKGTILKASVDYIRKL). Residues 354 to 357 (RRRR) carry the Nuclear localization signal motif. A leucine-zipper region spans residues 407–428 (LESRQRSLEQANRSLQLRIQEL). The tract at residues 531–573 (VGGLSGGTLSPLRAASDPLLSSVSPAVSKASSRRSSFSMEEES) is disordered. The span at 537–573 (GTLSPLRAASDPLLSSVSPAVSKASSRRSSFSMEEES) shows a compositional bias: low complexity. Residues Ser-540, Ser-546, Ser-552, Ser-554, Ser-558, and Ser-566 each carry the phosphoserine modification.

Belongs to the MiT/TFE family. In terms of assembly, homodimer and heterodimer; with TFEB or MITF. Interacts with RRAGC/RagC GDP-bound and RRAGD/RagD GDP-bound; promoting its recruitment to lysosomal membrane in the presence of nutrients. Phosphorylation ar Ser-47 and Ser-319 by MTOR via non-canonical mTORC1 pathway regulates its stability and subcellular location, respectively. When nutrients are present, phosphorylation by MTOR at Ser-47 promotes ubiquitination by the SCF(BTRC) complex, followed by degradation. When nutrients are present, phosphorylation by MTOR at Ser-319 also promotes association with 14-3-3/YWHA adapters and retention in the cytosol. Phosphorylation at Ser-47 plays a more critical role than phosphorylation at Ser-319 for TFE3 inactivation. Inhibition of mTORC1, starvation and lysosomal disruption, promotes dephosphorylation and transcription factor activity. Post-translationally, ubiquitinated by the SCF(BTRC) and SCF(FBXW11) complexes following phosphorylation at Ser-47 by MTOR, leading to its degradation by the proteasome. In terms of processing, sumoylated; does not affect dimerization with MITF.

It is found in the cytoplasm. Its subcellular location is the cytosol. The protein localises to the nucleus. The protein resides in the lysosome membrane. Functionally, transcription factor that acts as a master regulator of lysosomal biogenesis and immune response. Specifically recognizes and binds E-box sequences (5'-CANNTG-3'); efficient DNA-binding requires dimerization with itself or with another MiT/TFE family member such as TFEB or MITF. Involved in the cellular response to amino acid availability by acting downstream of MTOR: in the presence of nutrients, TFE3 phosphorylation by MTOR promotes its inactivation. Upon starvation or lysosomal stress, inhibition of MTOR induces TFE3 dephosphorylation, resulting in transcription factor activity. Specifically recognizes and binds the CLEAR-box sequence (5'-GTCACGTGAC-3') present in the regulatory region of many lysosomal genes, leading to activate their expression, thereby playing a central role in expression of lysosomal genes. Maintains the pluripotent state of embryonic stem cells by promoting the expression of genes such as ESRRB; mTOR-dependent TFE3 cytosolic retention and inactivation promotes exit from pluripotency. Required to maintain the naive pluripotent state of hematopoietic stem cell; mTOR-dependent cytoplasmic retention of TFE3 promotes the exit of hematopoietic stem cell from pluripotency. TFE3 activity is also involved in the inhibition of neuronal progenitor differentiation. Acts as a positive regulator of browning of adipose tissue by promoting expression of target genes; mTOR-dependent phosphorylation promotes cytoplasmic retention of TFE3 and inhibits browning of adipose tissue. In association with TFEB, activates the expression of CD40L in T-cells, thereby playing a role in T-cell-dependent antibody responses in activated CD4(+) T-cells and thymus-dependent humoral immunity. Specifically recognizes the MUE3 box, a subset of E-boxes, present in the immunoglobulin enhancer. It also binds very well to a USF/MLTF site. May regulate lysosomal positioning in response to nutrient deprivation by promoting the expression of PIP4P1. This Bos taurus (Bovine) protein is Transcription factor E3.